Reading from the N-terminus, the 126-residue chain is Probable cystatin-16 (126 aa).

The N-terminal stretch at 1–20 (MFLKATLLLGLAVLGMHVWA) is a signal peptide. Cysteine 84 and cysteine 94 form a disulfide bridge. N-linked (GlcNAc...) asparagine glycosylation occurs at asparagine 106.

This sequence belongs to the cystatin family.

It is found in the secreted. In Bos taurus (Bovine), this protein is Probable cystatin-16.